The primary structure comprises 57 residues: Large ribosomal subunit protein bL32 (57 aa).

Over residues 1–19 the composition is skewed to basic residues; it reads MAVPKRRMSRSNTRSRRSQ. The interval 1-21 is disordered; it reads MAVPKRRMSRSNTRSRRSQWK.

This sequence belongs to the bacterial ribosomal protein bL32 family.

This is Large ribosomal subunit protein bL32 from Mycobacteroides abscessus (strain ATCC 19977 / DSM 44196 / CCUG 20993 / CIP 104536 / JCM 13569 / NCTC 13031 / TMC 1543 / L948) (Mycobacterium abscessus).